Reading from the N-terminus, the 338-residue chain is Uroporphyrinogen decarboxylase (338 aa).

Substrate contacts are provided by residues 27-31 (RQAGR), aspartate 77, tyrosine 151, serine 203, and histidine 317.

Belongs to the uroporphyrinogen decarboxylase family. As to quaternary structure, homodimer.

It is found in the cytoplasm. The catalysed reaction is uroporphyrinogen III + 4 H(+) = coproporphyrinogen III + 4 CO2. It functions in the pathway porphyrin-containing compound metabolism; protoporphyrin-IX biosynthesis; coproporphyrinogen-III from 5-aminolevulinate: step 4/4. Functionally, catalyzes the decarboxylation of four acetate groups of uroporphyrinogen-III to yield coproporphyrinogen-III. The polypeptide is Uroporphyrinogen decarboxylase (Wolbachia sp. subsp. Drosophila simulans (strain wRi)).